The primary structure comprises 446 residues: MMITLRKLPLAVAVAAGVMSAQAMAVDFHGYARSGIGWTGSGGEQQCFQTTGAQSKYRLGNECETYAELKLGQEVWKEGDKSFYFDTNVAYSVAQQNDWEATDPAFREANVQGKNLIEWLPGSTIWAGKRFYQRHDVHMIDFYYWDISGPGAGLENIDVGFGKLSLAATRSSEAGGSSSFASNNIYDYTNETANDVFDVRLAQMEINPGGTLELGVDYGRANLRDNYRLVDGASKDGWLFTAEHTQSVLKGFNKFVVQYATDSMTSQGKGLSQGSGVAFDNEKFAYNINNNGHMLRILDHGAISMGDNWDMMYVGMYQDINWDNDNGTKWWTVGIRPMYKWTPIMSTVMEIGYDNVESQRTGDKNNQYKITLAQQWQAGDSIWSRPAIRVFATYAKWDEKWGYDYTGNANTNTNFGKAVPADFNGGSFGRGDSDEWTFGAQMEIWW.

The first 25 residues, 1–25, serve as a signal peptide directing secretion; the sequence is MMITLRKLPLAVAVAAGVMSAQAMA.

The protein belongs to the porin LamB (TC 1.B.3) family. Homotrimer formed of three 18-stranded antiparallel beta-barrels, containing three independent channels.

The protein localises to the cell outer membrane. The enzyme catalyses beta-maltose(in) = beta-maltose(out). Functionally, involved in the transport of maltose and maltodextrins. In Escherichia coli O7:K1 (strain IAI39 / ExPEC), this protein is Maltoporin.